The sequence spans 303 residues: Mycothiol acetyltransferase (303 aa).

2 N-acetyltransferase domains span residues 10-156 and 162-303; these read ALPG…LAVP and LAVR…SGPR. E41 lines the 1D-myo-inositol 2-(L-cysteinylamino)-2-deoxy-alpha-D-glucopyranoside pocket. Residue 86–88 coordinates acetyl-CoA; sequence LLV. E189, K228, and E235 together coordinate 1D-myo-inositol 2-(L-cysteinylamino)-2-deoxy-alpha-D-glucopyranoside. Acetyl-CoA-binding positions include 239–241 and 246–252; these read LGV and SGAGLGR. Y272 serves as a coordination point for 1D-myo-inositol 2-(L-cysteinylamino)-2-deoxy-alpha-D-glucopyranoside. 277-282 serves as a coordination point for acetyl-CoA; sequence NLRAVR.

This sequence belongs to the acetyltransferase family. MshD subfamily. As to quaternary structure, monomer.

It carries out the reaction 1D-myo-inositol 2-(L-cysteinylamino)-2-deoxy-alpha-D-glucopyranoside + acetyl-CoA = mycothiol + CoA + H(+). Catalyzes the transfer of acetyl from acetyl-CoA to desacetylmycothiol (Cys-GlcN-Ins) to form mycothiol. This chain is Mycothiol acetyltransferase, found in Kineococcus radiotolerans (strain ATCC BAA-149 / DSM 14245 / SRS30216).